The chain runs to 414 residues: MSGIIATYLIHDDSHNLEKKAEQIALGLTIGSWTHLPQLLQEQLKQHKGNVIHIVELAEHEHTNSYLRKKVKRGIIKIEYPLLNFSPDLPAILTTTFGKLSLDGEVKLIDLTFSDELKKHFPGPKFGIDGIRNLLQVHDRPLLMSIFKGMIGRNIGYLKTQLRDQAIGGVDIVKDDEILFENALTPLTKRIVSGKEVLQSVYETYGHKTLYAVNLTGRTFDLKENAKRAVQAGADILLFNVFAYGLDVLQSLAEDDEIPVPIMAHPAVSGAYSASKLYGISSPLLLGKLLRYAGADFSLFPSPYGSVALEKEEALAISKYLTEDDAFFKKSFSVPSAGIHPGFVPFIVRDFGKDVVINAGGGIHGHPNGAQGGGKAFRTAIEATLQNKPLHEVDDINLHSALQIWGNPSHEVKL.

K99 (proton acceptor) is an active-site residue. Substrate-binding positions include K148, 174–177, H265, G338, and 360–361; these read KDDE and GG. K174, D176, and E177 together coordinate Mg(2+). N6-carboxylysine is present on K174.

The protein belongs to the RuBisCO large chain family. Type IV subfamily. In terms of assembly, homodimer. Mg(2+) is required as a cofactor.

The catalysed reaction is 5-methylsulfanyl-2,3-dioxopentyl phosphate = 2-hydroxy-5-methylsulfanyl-3-oxopent-1-enyl phosphate. The protein operates within amino-acid biosynthesis; L-methionine biosynthesis via salvage pathway; L-methionine from S-methyl-5-thio-alpha-D-ribose 1-phosphate: step 3/6. In terms of biological role, catalyzes the enolization of 2,3-diketo-5-methylthiopentyl-1-phosphate (DK-MTP-1-P) into 2-hydroxy-3-keto-5-methylthiopentenyl-1-phosphate (HK-MTPenyl-1-P). The chain is 2,3-diketo-5-methylthiopentyl-1-phosphate enolase from Bacillus cereus (strain G9842).